The chain runs to 68 residues: Conotoxin Cal12.1p3 (68 aa).

The propeptide occupies 1-21 (DLITNSYTRGKPRHVTSWPKL).

In terms of processing, contains 4 disulfide bonds. As to expression, expressed by the venom duct.

Its subcellular location is the secreted. This is Conotoxin Cal12.1p3 from Californiconus californicus (California cone).